The primary structure comprises 237 residues: Purine nucleoside phosphorylase DeoD-type (237 aa).

His-4 contributes to the a purine D-ribonucleoside binding site. Phosphate-binding positions include Gly-20, Arg-24, Arg-43, and 87–90; that span reads RVGT. A purine D-ribonucleoside-binding positions include 179–181 and 203–204; these read EME and SD. The active-site Proton donor is the Asp-204.

Belongs to the PNP/UDP phosphorylase family. Homohexamer; trimer of homodimers.

The catalysed reaction is a purine D-ribonucleoside + phosphate = a purine nucleobase + alpha-D-ribose 1-phosphate. It catalyses the reaction a purine 2'-deoxy-D-ribonucleoside + phosphate = a purine nucleobase + 2-deoxy-alpha-D-ribose 1-phosphate. Its function is as follows. Catalyzes the reversible phosphorolytic breakdown of the N-glycosidic bond in the beta-(deoxy)ribonucleoside molecules, with the formation of the corresponding free purine bases and pentose-1-phosphate. This chain is Purine nucleoside phosphorylase DeoD-type, found in Streptococcus pyogenes serotype M4 (strain MGAS10750).